The primary structure comprises 440 residues: IAA-amino acid hydrolase ILR1-like 4 (440 aa).

A signal peptide spans Met-1–Cys-23. 5 residues coordinate Mn(2+): Cys-134, His-136, Glu-170, His-194, and His-397. Residues Lys-437 to Leu-440 carry the Prevents secretion from ER motif.

This sequence belongs to the peptidase M20 family. The cofactor is Mn(2+). In terms of tissue distribution, expressed in leaves, stems, roots, siliques and flowers. Detected in the vascular tissue of cotyledons and roots, in adult leaves, stems, siliques, petals, hydathodes and in silique abscission zones and funicles.

It is found in the endoplasmic reticulum lumen. The enzyme catalyses a jasmonyl-L-amino acid + H2O = a jasmonate + an L-alpha-amino acid. Functionally, hydrolyzes certain amino acid conjugates of the plant growth regulator indole-3-acetic acid (IAA), including IAA-Ala, IAA-Asn, IAA-Cys, IAA-Glu, IAA-Met, IAA-Ser and IAA-Gly. Has a lower efficiency with IAA-Phe, IAA-Leu and IAA-Val and no activity with IAA-Ile. Important for IAA-Leu hydrolysis in roots. Also hydrolyzes amino acid conjugates of jasmonic acid and 12-hydroxy jasmonic acid. The protein is IAA-amino acid hydrolase ILR1-like 4 of Arabidopsis thaliana (Mouse-ear cress).